The following is a 1338-amino-acid chain: Thioester-containing protein 1 allele S3 (1338 aa).

A signal peptide spans 1 to 21 (MWQFIRSRILTVIIFIGAAHG). Asparagine 68, asparagine 199, asparagine 242, asparagine 312, and asparagine 481 each carry an N-linked (GlcNAc...) asparagine glycan. The may contain the cleavage site stretch occupies residues 580 to 609 (ENEFDIFHSLGLFARTLDDILFDSANEKTG). N-linked (GlcNAc...) asparagine glycans are attached at residues asparagine 637, asparagine 728, asparagine 813, and asparagine 828. Positions 859–862 (CGEQ) form a cross-link, isoglutamyl cysteine thioester (Cys-Gln). 3 disulfides stabilise this stretch: cysteine 1217/cysteine 1283, cysteine 1326/cysteine 1338, and cysteine 1329/cysteine 1334.

Heterodimer of a TEP1-N chain and an TEP1-C chain non-covalently linked. Forms a complex composed of TEP1-N and TEP1-C heterodimer, LRIM1 and APL1C; the interaction stabilizes TEP1-N and TEP1-C heterodimer, prevents its binding to tissues while circulating in the hemolymph and protects the thioester bond from hydrolysis. Mature TEP1 and to a lesser extent full-length TEP1 interact with SPCLIP1; the interaction is induced by microbial infection. Post-translationally, in the hemolymph, the full-length protein is cleaved by an unknow protease into a 75kDa N-terminal (TEP1-N) chain and an 80kDa C-terminal (TEP1-C) chain which remain non-covalently linked. The TEP1-C chain contains the thioester bond which covalently binds to the pathogen surface. Cleavage is induced by bacterial infection or aseptic wound injury. During embryonic and pupal development, the cleaved form is the predominant form. N-glycosylated.

It localises to the secreted. Plays an essential role in the innate immune response against bacteria, fungi and protozoa infection. After proteolytic cleavage, the protein C-terminus binds covalently through a thioester bond to the pathogen surface resulting in pathogen clearance either by melanization or lysis. Initiate the recruitment and activation of a cascade of proteases, mostly of CLIP-domain serine proteases, which leads to the proteolytic cleavage of the prophenoloxidase (PPO) into active phenoloxidase (PO), the rate-limiting enzyme in melanin biosynthesis. In response to parasite P.berghei-mediated infection, binds to and mediates killing of ookinetes, as they egress from midgut epithelial cells into the basal labyrinth, by both lysis and melanization. During bacterial infection, binds to both Gram-positive and Gram-negative bacteria but only promotes phagocytosis of Gram-negative bacteria. Promotes the accumulation of SPCLIP1 onto the surface of P.berghei ookinetes and bacterium E.coli which leads to the melanization of the pathogen. Recruits CLIPA2 to bacteria surface. In response to bacterial infection, required for periostial hemocyte aggregation, but not for the aggregation of sessile hemocytes in non-periostial regions. During the late stage of fungus B.bassiana-mediated infection, required for the initiation of hyphae melanization by binding to the surface of hyphae and recruiting prophenoloxidase PPO to them. Plays a role in male fertility by binding to defective sperm cells and promoting their removal during spermatogenesis. Functionally, binds to and mediates killing of parasite P.bergei ookinetes by lysis. In terms of biological role, binds covalently through a thioester bond to the pathogen surface resulting in pathogen clearance. This chain is Thioester-containing protein 1 allele S3, found in Anopheles gambiae (African malaria mosquito).